We begin with the raw amino-acid sequence, 241 residues long: NLP effector protein 7 (241 aa).

An N-terminal signal peptide occupies residues Met-1 to Ala-19. The Conserved undecapeptide motif motif lies at Ala-105–Ala-115. The short motif at Gly-125–Leu-131 is the Conserved heptapeptide motif element. N-linked (GlcNAc...) asparagine glycosylation is present at Asn-144.

The protein belongs to the Necrosis inducing protein (NPP1) family.

It is found in the secreted. Its function is as follows. Secreted effector that acts as a pathogen-associated molecular pattern (PAMP) recognized by the plant immune system. Induces necrosis in Nicotiana benthamiana leaves and can induce Phytophthora capsici resistance in Nicotiana benthamiana. Also significantly improves disease resistance of Arabidopsis thaliana to Hyaloperonospora arabidopsidis. causes an inhibition of plant growth which is typically associated with enhanced immunity when over-expressed in Arabidopsis. This is NLP effector protein 7 from Plasmopara viticola (Downy mildew of grapevine).